The primary structure comprises 720 residues: TAL effector protein Rip19 (720 aa).

Disordered regions lie at residues 13–85 (SVSL…PSLV) and 175–205 (QAFA…PTFL). Residues 67 to 85 (PRRPLPVAPASAPPAPSLV) show a composition bias toward pro residues. Residues 185 to 191 (RSARARR) carry the Nuclear localization signal 1 motif. Residues 286 to 320 (LTRAHIVDIARQRSGDLALQALLPVATALTAAPLR) form a Cryptic repeat -1 repeat. Residues 321–354 (LSASQIATVAQYGERPAIQALYRLRRKLTRAPLH) form a Cryptic repeat 0 repeat. The Core repeat 1 repeat unit spans residues 355–389 (LTPQQVVAIASHDGGKPALEAVWAKLPVLRGVPYA). The Cryptic repeat +1 repeat unit spans residues 390 to 423 (LSTAQVVAIACISGQQALEAIEAHMPTLRQAPHS). Residues 424 to 457 (LSPERVAAIACIGGRSAVEAVRQGLPVKAIRRIR) form a Cryptic repeat +2 repeat. Short sequence motifs (nuclear localization signal) lie at residues 455 to 458 (RIRR), 583 to 586 (HRKR), and 620 to 623 (RRKR). The segment at 571–611 (SPGMAGQSACSPHRKRPAETAIAPRSIRRRPNNAGQPSEPW) is disordered.

This sequence belongs to the transcription activator-like effector (TALE) family. RipTAL/RTL subfamily.

The protein resides in the secreted. It is found in the host nucleus. Functionally, does not activate plant gene transcription, because it has too few core repeats. In Ralstonia solanacearum (Pseudomonas solanacearum), this protein is TAL effector protein Rip19.